Consider the following 791-residue polypeptide: Cellobionic acid phosphorylase (791 aa).

Catalysis depends on Asp478, which acts as the Proton donor.

The protein belongs to the glycosyl hydrolase 94 family. Cellobionic acid phosphorylase subfamily. Homodimer.

It carries out the reaction 4-O-beta-D-glucopyranosyl-D-gluconate + phosphate = D-gluconate + alpha-D-glucose 1-phosphate. It participates in glycan metabolism; cellulose degradation. Its function is as follows. Catalyzes the reversible phosphorolysis of cellobionic acid (4-O-beta-D-glucopyranosyl-D-gluconate), a probable step in cellulose degradation. May be part of a metabolic pathway where cellobionic acid is converted into alpha-D-glucose 1-phosphate and D-gluconic acid to enter glycolysis and the pentose phosphate pathway, respectively. Produces 4-O-beta-D-glucopyranosyl-D-glucuronate from alpha-D-glucose 1-phosphate and D-glucuronate with low activity in the synthetic direction. The polypeptide is Cellobionic acid phosphorylase (Neurospora crassa (strain ATCC 24698 / 74-OR23-1A / CBS 708.71 / DSM 1257 / FGSC 987)).